Consider the following 301-residue polypeptide: Probable alpha-L-glutamate ligase 1 (301 aa).

In terms of domain architecture, ATP-grasp spans 104 to 287; sequence MQLMSRRGIG…VAGAIIEFVE (184 aa). ATP is bound by residues K141, 178–179, D187, and 211–213; these read EY and RSN. Positions 248, 260, and 262 each coordinate Mg(2+). Mn(2+) is bound by residues D248, E260, and N262.

The protein belongs to the RimK family. Requires Mg(2+) as cofactor. Mn(2+) is required as a cofactor.

In Shewanella putrefaciens (strain CN-32 / ATCC BAA-453), this protein is Probable alpha-L-glutamate ligase 1.